Reading from the N-terminus, the 425-residue chain is MQTISPAFSCDLKSVIQPNLTAKKARYSHVNGKRVSVRCSYRSESFSFPNGVGSSRADWQSSCAILASKVVSAENSSSVAVVNGHSNGSVDLSLVPSKSQHNGKPGLIQPLTITDLSPAPSHGSTLRVAYQGVPGAYSEAAAGKAYPNSEAIPCDQFDVAFQAVELWIADRAVLPVENSLGGSIHRNYDLLLRHRLHIVGEVQIPVHHCLLALPGVRTDCITRVISHPQALAQTEGSLNKLTPKAAIEAFHDTAAAAEYIAANNLHDTAAVASARAAELYGLQILADGIQDDAGNVTRFLMLARDPIIPRTDRPFKTSIVFAAQEHKGTSVLFKVLSAFAFRNISLTKIESRPHQNCPVRVVGDENVGTSKHFEYTFYVDFEASMAEARAQNALAEVQEYTSFLRVLGSYPMDMTPWSTLPSEDV.

The N-terminal 38 residues, 1 to 38 (MQTISPAFSCDLKSVIQPNLTAKKARYSHVNGKRVSVR), are a transit peptide targeting the chloroplast. Positions 127–304 (RVAYQGVPGA…NVTRFLMLAR (178 aa)) constitute a Prephenate dehydratase domain. The ACT domain occupies 320–411 (VFAAQEHKGT…SFLRVLGSYP (92 aa)).

Expressed in roots, leaves, stems, flowers and siliques. More abundant in stems and roots.

It is found in the plastid. The protein resides in the chloroplast stroma. The enzyme catalyses L-arogenate + H(+) = L-phenylalanine + CO2 + H2O. The protein operates within amino-acid biosynthesis; L-phenylalanine biosynthesis; L-phenylalanine from L-arogenate: step 1/1. In terms of biological role, converts the prephenate produced from the shikimate-chorismate pathway into phenylalanine. This Arabidopsis thaliana (Mouse-ear cress) protein is Arogenate dehydratase 5, chloroplastic.